Reading from the N-terminus, the 1551-residue chain is Serine/threonine-protein kinase MRCK gamma (1551 aa).

One can recognise a Protein kinase domain in the interval 71–337; that stretch reads FEILKVIGRG…LDDFRNHPFF (267 aa). Residues 77-85 and K100 each bind ATP; that span reads IGRGAFGEV. Residue D195 is the Proton acceptor of the active site. Residues S216 and S228 each carry the phosphoserine; by autocatalysis modification. Residue T234 is modified to Phosphothreonine; by autocatalysis. Positions 338 to 408 constitute an AGC-kinase C-terminal domain; the sequence is EGVDWERLAS…TSGSHSPESS (71 aa). Coiled-coil stretches lie at residues 406–678 and 730–802; these read ESSS…SNWE and KARR…RARG. Disordered stretches follow at residues 467–486, 655–675, 801–849, and 863–886; these read KASL…QDSD, ELAQ…ETES, RGPV…PEGR, and TANT…PRSF. The segment covering 655–674 has biased composition (basic and acidic residues); the sequence is ELAQEQESKQRLEGERRETE. The span at 835–849 shows a compositional bias: basic and acidic residues; sequence ATRHGGEPDLRPEGR. The Phorbol-ester/DAG-type zinc finger occupies 878-927; sequence SHTLRPRSFPSPTKCLRCTSLMLGLGRQGLGCDACGYFCHTTCAPQAPPC. A PH domain is found at 947-1066; sequence GTAYEGFLSV…WLQVLGELQR (120 aa). The CNH domain maps to 1092 to 1366; it reads LPHTLCAAIL…RPLNPEGSLF (275 aa). Residues 1437–1450 enclose the CRIB domain; it reads ISPPTNFNHLVHVG. The segment at 1442–1551 is disordered; it reads NFNHLVHVGP…PLSPELESSP (110 aa). Basic and acidic residues predominate over residues 1457–1470; that stretch reads GARDKSPAPEEKGR. Position 1482 is a phosphoserine (S1482). Residues 1511–1533 show a composition bias toward polar residues; that stretch reads TSLSSESVSCPQGSLSPATSLMQ. A compositionally biased stretch (low complexity) spans 1540–1551; the sequence is SLPLSPELESSP.

This sequence belongs to the protein kinase superfamily. AGC Ser/Thr protein kinase family. DMPK subfamily. In terms of assembly, homodimer and homotetramer via the coiled coil regions. Interacts tightly with GTP-bound but not GDP-bound CDC42. It depends on Mg(2+) as a cofactor. Expressed in heart and skeletal muscle.

Its subcellular location is the cytoplasm. The catalysed reaction is L-seryl-[protein] + ATP = O-phospho-L-seryl-[protein] + ADP + H(+). It catalyses the reaction L-threonyl-[protein] + ATP = O-phospho-L-threonyl-[protein] + ADP + H(+). Its activity is regulated as follows. Maintained in an inactive, closed conformation by an interaction between the kinase domain and the negative autoregulatory C-terminal coiled-coil region. Agonist binding to the phorbol ester binding site disrupts this, releasing the kinase domain to allow N-terminus-mediated dimerization and kinase activation by transautophosphorylation. Functionally, may act as a downstream effector of CDC42 in cytoskeletal reorganization. Contributes to the actomyosin contractility required for cell invasion, through the regulation of MYPT1 and thus MLC2 phosphorylation. The protein is Serine/threonine-protein kinase MRCK gamma of Homo sapiens (Human).